The chain runs to 710 residues: Polyribonucleotide nucleotidyltransferase (710 aa).

The Mg(2+) site is built by Asp-489 and Asp-495. In terms of domain architecture, KH spans Pro-556 to Ile-615. The 69-residue stretch at Gly-625–Lys-693 folds into the S1 motif domain. Positions Ser-691–Asp-710 are disordered. Over residues Pro-700–Asp-710 the composition is skewed to basic and acidic residues.

This sequence belongs to the polyribonucleotide nucleotidyltransferase family. Mg(2+) serves as cofactor.

It is found in the cytoplasm. It carries out the reaction RNA(n+1) + phosphate = RNA(n) + a ribonucleoside 5'-diphosphate. Its function is as follows. Involved in mRNA degradation. Catalyzes the phosphorolysis of single-stranded polyribonucleotides processively in the 3'- to 5'-direction. The protein is Polyribonucleotide nucleotidyltransferase of Streptococcus pyogenes serotype M49 (strain NZ131).